We begin with the raw amino-acid sequence, 703 residues long: Zinc finger protein 750 (703 aa).

Residues 25-51 (YKCFQCPFTCNEKSHLFNHMKYGLCKN) form a CCHC-type zinc finger. Zn(2+)-binding residues include C27, C30, H43, and C49. Disordered regions lie at residues 64-113 (KCPK…DAKE), 350-527 (PASS…YGPM), 553-614 (WAPR…KQTA), and 630-703 (RVAD…TRVS). A compositionally biased stretch (polar residues) spans 67–106 (KSSSLDPKQTHQPEPTSKPATSKSLLNGLSSFDPKSQQGS). Residues 352-361 (SSPSELNLSS) are compositionally biased toward low complexity. Basic and acidic residues predominate over residues 367-394 (TECEKGSPVPEAKDPSKDGQRDAEEAKM). 2 stretches are compositionally biased toward polar residues: residues 410–421 (SPTNFTQTSQTF) and 456–477 (GSES…SLQA). The span at 574–611 (TETKGSEDRTSRVETPQDKAHSRTTPDVHTEDSSDEQK) shows a compositional bias: basic and acidic residues. Positions 639-655 (QEPTRQDVPTLSATENL) are enriched in polar residues.

It is found in the nucleus. In terms of biological role, transcription factor involved in epidermis differentiation. Required for terminal epidermal differentiation: acts downstream of p63/TP63 and activates expression of late epidermal differentiation genes. Specifically binds to the promoter of KLF4 and promotes its expression. The protein is Zinc finger protein 750 (Znf750) of Mus musculus (Mouse).